Here is an 824-residue protein sequence, read N- to C-terminus: Translation initiation factor IF-2 (824 aa).

2 disordered regions span residues Met-1–Lys-32 and Val-45–Gln-232. Residues Val-45 to Lys-57 are compositionally biased toward low complexity. Residues Lys-86–Ala-144 show a composition bias toward basic and acidic residues. The segment covering Ala-145–Pro-167 has biased composition (low complexity). The span at Ala-170–Arg-193 shows a compositional bias: basic and acidic residues. In terms of domain architecture, tr-type G spans Thr-321–Glu-489. The tract at residues Gly-330–Thr-337 is G1. Gly-330–Thr-337 lines the GTP pocket. Positions Gly-355–His-359 are G2. Residues Asp-377–Gly-380 form a G3 region. GTP-binding positions include Asp-377–His-381 and Asn-431–Asp-434. A G4 region spans residues Asn-431 to Asp-434. The G5 stretch occupies residues Ser-467–Ile-469.

This sequence belongs to the TRAFAC class translation factor GTPase superfamily. Classic translation factor GTPase family. IF-2 subfamily.

The protein resides in the cytoplasm. Its function is as follows. One of the essential components for the initiation of protein synthesis. Protects formylmethionyl-tRNA from spontaneous hydrolysis and promotes its binding to the 30S ribosomal subunits. Also involved in the hydrolysis of GTP during the formation of the 70S ribosomal complex. In Roseobacter denitrificans (strain ATCC 33942 / OCh 114) (Erythrobacter sp. (strain OCh 114)), this protein is Translation initiation factor IF-2.